Consider the following 61-residue polypeptide: Small ribosomal subunit protein uS14 (61 aa).

Residues 1–14 (MAKTSQKVRNHRPA) show a composition bias toward basic residues. Residues 1–20 (MAKTSQKVRNHRPAKFSSRE) are disordered. Zn(2+)-binding residues include C24, C27, C40, and C43.

Belongs to the universal ribosomal protein uS14 family. Zinc-binding uS14 subfamily. Part of the 30S ribosomal subunit. Contacts proteins S3 and S10. It depends on Zn(2+) as a cofactor.

In terms of biological role, binds 16S rRNA, required for the assembly of 30S particles and may also be responsible for determining the conformation of the 16S rRNA at the A site. The protein is Small ribosomal subunit protein uS14 of Lactobacillus delbrueckii subsp. bulgaricus (strain ATCC 11842 / DSM 20081 / BCRC 10696 / JCM 1002 / NBRC 13953 / NCIMB 11778 / NCTC 12712 / WDCM 00102 / Lb 14).